The following is a 922-amino-acid chain: MKKKTYQFEKFLKNTFDQFSIKQNEVLVEDDLNDIIMNVCGKALVLMINEKREMNLLMGNTPEERYQYFENEYSSTGKAFEEIKDKFPVIYIDLKNSINSYLKLVSQIMKDFKKDYSLLVERKIIEEHSTISTMKIKGDLHNGKAVIEITTNKSKLIYKPKSLSNDVFFNNFLKYMDSFFIKEGKSTKYKENFYLVNTLDMKTYGWVEYVDKKPINSFEEARNYYRKIGVLLSVAYTLNLTDLHFENVISQGENPCIIDLETMFNMPMFVKDYKNESRNIINGKIMDSVVSTGMLPVLGIDSLFGGDPSGILGGTFSKEERVIINPFRDDIKFQKIVVRSVFKDHIPFFNNNNEKRYCKPKDYVNDIIKGFEKTYKIIVKNKEKILGFLKKESSSVTCRILFRNTMEYSVLLNAAKSPVYSNKREEIFEKLSTFNRGLGNDIIKSEISQINTLSIPYFNCQVDSNLIKNMDGETIFEHTLTPFKCFLSKYRRLCVDDMEQQVKLIRFSIQSQEQLFKDGEQFSLYKKQKGSQEDLLIAINELSSILENNAYIGTSDDTINWMSLGIADNDQILFESLENDIYKGISGIGLALLEYYEFYPNINTKKILKLIYKNISKDFINTNNEPQNYGFYVGLIGEYSFLRKYEKVFHKTSSCNILKNILKDFTPEKCQTILPSDDVIAGEAGIIIYISNLNNYLEYRDEIDILLKSLSNKIKLKESIASYAHGNSGIATAFVHGYKVTKNEKYLKIFHELWNLENSSKLRRGWTDSRKVDSSYSSQWCHGASGQAIARMEWITVNKTARFLSNSELIKVKKELGELIDILKKEGMYTDNFCLCHGILGNLLILNTYQENFDNKNINLKNEILNNYYSVCNYGLNKGWICGLGTEFYSYGLMTGISGILYGLIRQVKQKNNFGVLMPYVD.

Functionally, could be implicated in the processing or the export process of the lantibiotic lacticin 481/lactococcin DR. In Lactococcus lactis subsp. lactis (Streptococcus lactis), this protein is Lacticin 481/lactococcin biosynthesis protein LcnDR2 (lcnDR2).